Here is a 702-residue protein sequence, read N- to C-terminus: Phosphatase and actin regulator 4 (702 aa).

Disordered regions lie at residues 1-38 (MEDPFEEADQPATEPGMVMDSVEAGDTTPPTKRKSKFS), 82-194 (GVLL…SSGG), and 222-363 (NLSV…PFPA). The stretch at 63 to 88 (EVLERKISMRKPREELVKRGVLLEDP) is one RPEL 1 repeat. Polar residues predominate over residues 106–120 (GHTTPIGNARSSSPV). 4 positions are modified to phosphoserine: serine 116, serine 118, serine 131, and serine 147. Positions 147-156 (STGSQPNSEA) are enriched in polar residues. The span at 163–173 (VPKPPLLPPKR) shows a compositional bias: pro residues. The segment covering 233–250 (TLPAAPASTNTTATPSLT) has biased composition (low complexity). Residues serine 270 and serine 291 each carry the phosphoserine modification. The segment covering 301 to 318 (PSTSVPTLESAAAITTKT) has biased composition (polar residues). Residues serine 342 and serine 344 each carry the phosphoserine modification. Positions 342–362 (SPSPPLPTHIPPEPPRTPPFP) are enriched in pro residues. A Phosphothreonine modification is found at threonine 358. Serine 427 is modified (phosphoserine). Threonine 432 is subject to Phosphothreonine. Phosphoserine is present on residues serine 443, serine 453, and serine 464. The segment at 473–536 (KVPDDEEEEE…EEDEDESYQS (64 aa)) is disordered. Positions 486–497 (PSTFSEETTPTS) are enriched in low complexity. Acidic residues predominate over residues 508–518 (EEEEKESDSDS). Serine 514, serine 516, serine 557, and serine 590 each carry phosphoserine. 2 RPEL repeats span residues 583 to 608 (NTLIRRLSQRPTPEELEQRNILQPKN) and 621 to 646 (RRLTRKLSQRPTVAELLARKILRFNE). A disordered region spans residues 592–615 (RPTPEELEQRNILQPKNEADRQAE). Serine 628 carries the post-translational modification Phosphoserine.

Belongs to the phosphatase and actin regulator family. Binds PPP1CA and actin.

The protein resides in the cytoplasm. Its subcellular location is the cell projection. It is found in the lamellipodium. Regulator of protein phosphatase 1 (PP1) required for neural tube and optic fissure closure, and enteric neural crest cell (ENCCs) migration during development. Acts as an activator of PP1 by interacting with PPP1CA and preventing phosphorylation of PPP1CA at 'Thr-320'. During neural tube closure, localizes to the ventral neural tube and activates PP1, leading to down-regulate cell proliferation within cranial neural tissue and the neural retina. Also acts as a regulator of migration of enteric neural crest cells (ENCCs) by activating PP1, leading to dephosphorylation and subsequent activation of cofilin (COF1 or COF2) and repression of the integrin signaling through the RHO/ROCK pathway. In Pongo abelii (Sumatran orangutan), this protein is Phosphatase and actin regulator 4 (PHACTR4).